Reading from the N-terminus, the 946-residue chain is MAVYCYALNSLVIMNSANEMKSGGGPGPSGSETPPPPRRAVLSPGSVFSPGRGASFLFPPAESLSPEEPRSPGGWRSGRRRLNSSSGSGSGSSGSSVSSPSWAGRLRGDRQQVVAAGTLSPPGPEEAKRKLRILQRELQNVQVNQKVGMFEAHIQAQSSAIQAPRSPRLGRARSPSPCPFRSSSQPPGRVLVQGARSEERRTKSWGEQCPETSGTDSGRKGGPSLCSSQVKKGMPPLPGRAAPTGSEAQGPSAFVRMEKGIPASPRCGSPTAMEIDKRGSPTPGTRSCLAPSLGLFGASLTMATEVAARVTSTGPHRPQDLALTEPSGRARELEDLQPPEALVERQGQFLGSETSPAPERGGPRDGEPPGKMGKGYLPCGMPGSGEPEVGKRPEETTVSVQSAESSDSLSWSRLPRALASVGPEEARSGAPVGGGRWQLSDRVEGGSPTLGLLGGSPSAQPGTGNVEAGIPSGRMLEPLPCWDAAKDLKEPQCPPGDRVGVQPGNSRVWQGTMEKAGLAWTRGTGVQSEGTWESQRQDSDALPSPELLPQDPDKPFLRKACSPSNIPAVIITDMGTQEDGALEETQGSPRGNLPLRKLSSSSASSTGFSSSYEDSEEDISSDPERTLDPNSAFLHTLDQQKPRVSKSWRKIKNMVHWSPFVMSFKKKYPWIQLAGHAGSFKAAANGRILKKHCESEQRCLDRLMVDVLRPFVPAYHGDVVKDGERYNQMDDLLADFDSPCVMDCKMGIRTYLEEELTKARKKPSLRKDMYQKMIEVDPEAPTEEEKAQRAVTKPRYMQWRETISSTATLGFRIEGIKKEDGTVNRDFKKTKTREQVTEAFREFTKGNHNILIAYRDRLKAIRTTLEVSPFFKCHEVIGSSLLFIHDKKEQAKVWMIDFGKTTPLPEGQTLQHDVPWQEGNREDGYLSGLNNLVDILTEMSQDAPLA.

Disordered stretches follow at residues Glu-19–Lys-128, Ala-156–Cys-288, Ala-308–Ser-472, Lys-486–Cys-561, and Gly-580–Asp-638. Phosphoserine is present on residues Ser-43, Ser-49, and Ser-71. Over residues Asn-83–Arg-105 the composition is skewed to low complexity. Residues Ser-204 and Ser-269 each carry the phosphoserine modification. Residues Thr-396–Trp-411 show a composition bias toward polar residues. Residues Gly-445 to Ser-458 are compositionally biased toward low complexity. Residues Thr-524–Ser-534 are compositionally biased toward polar residues. The span at Ser-599 to Tyr-612 shows a compositional bias: low complexity. Residues Ser-679, Lys-690, Asp-730–Leu-732, and Asp-743 each bind ATP. The substrate site is built by Lys-745 and Arg-766. A calmodulin-binding region spans residues Asp-768–Val-776. A substrate-binding site is contributed by Lys-793–Arg-800. Positions 817 and 897 each coordinate ATP. Lys-900 provides a ligand contact to substrate.

This sequence belongs to the inositol phosphokinase (IPK) family. In terms of assembly, interacts with DMTN.

The protein resides in the cytoplasm. It is found in the cytoskeleton. It localises to the endoplasmic reticulum. The catalysed reaction is 1D-myo-inositol 1,4,5-trisphosphate + ATP = 1D-myo-inositol 1,3,4,5-tetrakisphosphate + ADP + H(+). With respect to regulation, IP3K is activated by calcium and calmodulin. Form B is much more sensitive to calcium/calmodulin than form A. Its function is as follows. Catalyzes the phosphorylation of 1D-myo-inositol 1,4,5-trisphosphate (InsP3) into 1D-myo-inositol 1,3,4,5-tetrakisphosphate and participates to the regulation of calcium homeostasis. This chain is Inositol-trisphosphate 3-kinase B, found in Homo sapiens (Human).